We begin with the raw amino-acid sequence, 412 residues long: MATTSHNKPSLFPLLSLLCFISIFLLLSLSKRASLSSPKTHRSATVFPPKPDGSLSPLSATCDFSEGSWIYDPNPRSTRYTSSCKEIFKGWNCIRNNKTNGFEISNWRWKPKHCDLPSFDPLKFLQSHRNTNIGFVGDSLNRNMFVSLFCMLKSVTGELKKWRPAGADRGFTFSQYNLTIAYHRTNLLARYGRWSANAKGGELESLGFKEGYRVDVDIPDSSWAKASSFHDILILNTGHWWWAPSKFDPVKSPMLFFEGGRPILPPIPPATGLDRVLNNMVNFVEKTKRPGGIIFFRTQSPRHFEGGDWDQGGTCQRLQPLLPGKVEEFFSVGNNGTNVEVRLVNQHLYNSLKSRSAFHVLDITRMSEYRADAHPAAAGGKNHDDCMHWCLPGLTDTWNDLFVATLHTIKAL.

The chain crosses the membrane as a helical; Signal-anchor for type II membrane protein span at residues 9–29 (PSLFPLLSLLCFISIFLLLSL). Positions 137-139 (GDS) match the GDS motif motif. The short motif at 385–399 (DCMHWCLPGLTDTWN) is the DCXHWCLPGXXDXWN motif element.

It belongs to the PC-esterase family. TBL subfamily.

The protein localises to the membrane. Functionally, may act as a bridging protein that binds pectin and other cell wall polysaccharides. Probably involved in maintaining esterification of pectins. May be involved in the specific O-acetylation of cell wall polymers. The protein is Protein trichome birefringence-like 13 (TBL13) of Arabidopsis thaliana (Mouse-ear cress).